The chain runs to 316 residues: Pantothenate kinase (316 aa).

Position 95–102 (95–102 (GSVAVGKS)) interacts with ATP.

Belongs to the prokaryotic pantothenate kinase family.

The protein localises to the cytoplasm. The catalysed reaction is (R)-pantothenate + ATP = (R)-4'-phosphopantothenate + ADP + H(+). Its pathway is cofactor biosynthesis; coenzyme A biosynthesis; CoA from (R)-pantothenate: step 1/5. The protein is Pantothenate kinase of Shewanella putrefaciens (strain CN-32 / ATCC BAA-453).